A 593-amino-acid chain; its full sequence is MNELIKHKLELLPDSPGCYLHKDKNGTIIYVGKAKNLKNRVRSYFHGSHNTKTELLVSEIEDFEYIVTTSNTEALLLEINLIQENMPKYNIRLKDDKSYPYIKITNERYPRLMITRQVKKSDGTYFGPYPDSGAATEIKRLLDRLFPFKKCTNPANKVCFYYHLGQCNAHTVCQTNKAYWDSLREDVKQFLNGKDNKIVNGLTEKMKSAAMTMEFERAAEYRDLIEAISLLRTKQRVIHQDMKDRDVFGYFVDKGWMCVQVFFVRNGKLIQRDVNMFPYYNEPEEDFLTYIGQFYQDTKHFLPKEVFIPQDIDAKSVETIVGCKIVKPQRGEKKQLVNLAIKNARVSLQQKFDLLEKDIRKTHGAIENLGNLLNIPKPVRIEAFDNSNIQGTSPVAAMVVFVNGKPSKKDYRKFKIKTVIGPDDYASMREVIHRRYSRVLKDGLTPPDLIVIDGGQGQVNIARDVIENQLGLAIPIAGLQKNDKHQTHELLFGDPLEVVELPRNSEEFFLLHRIQDEVHRFAITFHRQLRSKNSFSSKLDGITGLGPKRKQLLMKHFKSLPNIQKADIEDIIMCGIPRTVAESLRDSLNDPPK.

The 78-residue stretch at 14–91 folds into the GIY-YIG domain; the sequence is DSPGCYLHKD…IQENMPKYNI (78 aa). A UVR domain is found at 196–231; that stretch reads NKIVNGLTEKMKSAAMTMEFERAAEYRDLIEAISLL.

Belongs to the UvrC family. In terms of assembly, interacts with UvrB in an incision complex.

The protein localises to the cytoplasm. In terms of biological role, the UvrABC repair system catalyzes the recognition and processing of DNA lesions. UvrC both incises the 5' and 3' sides of the lesion. The N-terminal half is responsible for the 3' incision and the C-terminal half is responsible for the 5' incision. This Streptococcus agalactiae serotype Ia (strain ATCC 27591 / A909 / CDC SS700) protein is UvrABC system protein C.